The chain runs to 169 residues: MKVTAMLNPHLLDVAYNYLLLMDMDCVVQSVQWKQLSTDTYCFEPFYDSQIKWLYAPKSGQSFDSYLENYATLIRVKQVQQHRKELILHCVDFLTMKANDNFMVFKNYINMIIKVYLQFYNYRFPINFEDNTMKPCVNLTFRRGGSWKTQLQPVCNYVYKSKNMPKFIK.

This is an uncharacterized protein from Autographa californica nuclear polyhedrosis virus (AcMNPV).